We begin with the raw amino-acid sequence, 147 residues long: Small ribosomal subunit protein uS12 (147 aa).

The protein belongs to the universal ribosomal protein uS12 family. In terms of assembly, part of the 30S ribosomal subunit.

With S4 and S5 plays an important role in translational accuracy. Located at the interface of the 30S and 50S subunits. This chain is Small ribosomal subunit protein uS12, found in Methanococcus vannielii (strain ATCC 35089 / DSM 1224 / JCM 13029 / OCM 148 / SB).